A 540-amino-acid chain; its full sequence is Type II methyltransferase M.AccI (540 aa).

Belongs to the N(4)/N(6)-methyltransferase family. As to quaternary structure, monomer.

It catalyses the reaction a 2'-deoxyadenosine in DNA + S-adenosyl-L-methionine = an N(6)-methyl-2'-deoxyadenosine in DNA + S-adenosyl-L-homocysteine + H(+). In terms of biological role, a gamma subtype methylase, recognizes the double-stranded sequence 5'-GTMKAC-3', methylates A-5 on both strands, and protects the DNA from cleavage by the AccI endonuclease. In Acinetobacter calcoaceticus, this protein is Type II methyltransferase M.AccI (accIM).